We begin with the raw amino-acid sequence, 264 residues long: Thymidylate synthase (264 aa).

Arg21 serves as a coordination point for dUMP. His51 serves as a coordination point for (6R)-5,10-methylene-5,6,7,8-tetrahydrofolate. 126–127 (RR) provides a ligand contact to dUMP. Cys146 functions as the Nucleophile in the catalytic mechanism. Residues 166–169 (RSAD), Asn177, and 207–209 (HIY) each bind dUMP. (6R)-5,10-methylene-5,6,7,8-tetrahydrofolate is bound at residue Asp169. Ala263 is a (6R)-5,10-methylene-5,6,7,8-tetrahydrofolate binding site.

It belongs to the thymidylate synthase family. Bacterial-type ThyA subfamily. Homodimer.

Its subcellular location is the cytoplasm. The catalysed reaction is dUMP + (6R)-5,10-methylene-5,6,7,8-tetrahydrofolate = 7,8-dihydrofolate + dTMP. The protein operates within pyrimidine metabolism; dTTP biosynthesis. In terms of biological role, catalyzes the reductive methylation of 2'-deoxyuridine-5'-monophosphate (dUMP) to 2'-deoxythymidine-5'-monophosphate (dTMP) while utilizing 5,10-methylenetetrahydrofolate (mTHF) as the methyl donor and reductant in the reaction, yielding dihydrofolate (DHF) as a by-product. This enzymatic reaction provides an intracellular de novo source of dTMP, an essential precursor for DNA biosynthesis. The chain is Thymidylate synthase from Cupriavidus metallidurans (strain ATCC 43123 / DSM 2839 / NBRC 102507 / CH34) (Ralstonia metallidurans).